Consider the following 382-residue polypeptide: O-antigen polymerase (382 aa).

Topologically, residues 1-3 are cytoplasmic; the sequence is MNN. A helical membrane pass occupies residues 4 to 22; it reads INKIFITFLCIELIIGGGG. Over 23 to 34 the chain is Periplasmic; it reads RLLEPLGIFPLR. The helical transmembrane segment at 35-54 threads the bilayer; that stretch reads YLLFVFSFILLIFNLVTFNF. Residues 55–62 lie on the Cytoplasmic side of the membrane; it reads SITQKCVS. A helical membrane pass occupies residues 63-81; sequence LFIWLLLFPFYGFFVGLLA. The Periplasmic segment spans residues 82 to 94; the sequence is GNKINDILFDVQP. Residues 95–112 form a helical membrane-spanning segment; that stretch reads YLFMLSLIYLFTLRYTLK. At 113-125 the chain is on the cytoplasmic side; sequence VFSCEIFIKIVNA. A helical transmembrane segment spans residues 126–146; sequence FALYGSLLYISYIILLNFGLL. At 147 to 167 the chain is on the periplasmic side; sequence NFNLIYEHLSLTSEFFFRPDG. The chain crosses the membrane as a helical span at residues 168–187; that stretch reads AFFSKSFYFFGVGAIISFVD. The Cytoplasmic portion of the chain corresponds to 188-189; it reads KK. The helical transmembrane segment at 190 to 206 threads the bilayer; it reads YLKCLIIVLAILLTESR. Residues 207–208 are Periplasmic-facing; sequence GV. Residues 209–226 traverse the membrane as a helical segment; that stretch reads LLFTTLSLLLASFKLHKL. The Cytoplasmic portion of the chain corresponds to 227-229; it reads YLN. Residues 230–247 form a helical membrane-spanning segment; the sequence is TIIIILGSVLFIIMLYMV. Residues 248–300 lie on the Periplasmic side of the membrane; sequence GSRSEDSDSVRFNDLYFYYKNVDLATFLFGRGFGSFILDRLRIEIVPLEILQK. A helical membrane pass occupies residues 301-318; it reads TGVIGVFISLVPMLLIFL. The Cytoplasmic portion of the chain corresponds to 319 to 329; that stretch reads KGYFLNSTKTS. Residues 330–349 traverse the membrane as a helical segment; sequence LMMSLILFFSITVSITNPFL. The Periplasmic portion of the chain corresponds to 350–352; the sequence is FTP. Residues 353–370 form a helical membrane-spanning segment; sequence MGIFIIGVVVLWVFSIEN. Residues 371–382 are Cytoplasmic-facing; the sequence is IQISNNLTSGAK.

Its subcellular location is the cell inner membrane. The enzyme catalyses n lipid-linked O-antigen repeat units = a lipid-linked O antigen + (n-1) polyisoprenyl diphosphate.. The protein operates within bacterial outer membrane biogenesis; LPS O-antigen biosynthesis. Polymerase involved in the biosynthesis of the lipopolysaccharide (LPS). Catalyzes the polymerization of the O-antigen repeat units on the periplasmic face of the inner membrane, leading to the formation of the lipid-linked O-antigen molecule. The polypeptide is O-antigen polymerase (Shigella flexneri).